The sequence spans 540 residues: GMP synthase [glutamine-hydrolyzing] (540 aa).

The 191-residue stretch at 26–216 (IIIILDFGSQ…VYHICECEPT (191 aa)) folds into the Glutamine amidotransferase type-1 domain. Cysteine 103 functions as the Nucleophile in the catalytic mechanism. Catalysis depends on residues histidine 190 and glutamate 192. The GMPS ATP-PPase domain maps to 217–415 (WTTAAFVEEA…VGLPEEIVQR (199 aa)). An ATP-binding site is contributed by 244–250 (SGGVDSS).

In terms of assembly, homodimer.

It catalyses the reaction XMP + L-glutamine + ATP + H2O = GMP + L-glutamate + AMP + diphosphate + 2 H(+). Its pathway is purine metabolism; GMP biosynthesis; GMP from XMP (L-Gln route): step 1/1. Its function is as follows. Catalyzes the synthesis of GMP from XMP. This chain is GMP synthase [glutamine-hydrolyzing], found in Trichormus variabilis (strain ATCC 29413 / PCC 7937) (Anabaena variabilis).